We begin with the raw amino-acid sequence, 2804 residues long: Nipped-B-like protein (2804 aa).

Composition is skewed to polar residues over residues 128–173 (LSQN…QNSP) and 191–208 (HPSS…SVSS). The tract at residues 128–340 (LSQNSMHSSP…LGKDEKEQSE (213 aa)) is disordered. Phosphoserine occurs at positions 150 and 162. The segment covering 234-249 (HHADNPRHGSSEDYLH) has biased composition (basic and acidic residues). 8 positions are modified to phosphoserine: Ser-243, Ser-256, Ser-274, Ser-280, Ser-284, Ser-301, Ser-306, and Ser-318. Basic and acidic residues predominate over residues 331 to 340 (LGKDEKEQSE). Position 350 is a phosphoserine (Ser-350). Residues 482-500 (RESAIERERFSKEVQDKDK) show a composition bias toward basic and acidic residues. A disordered region spans residues 482 to 946 (RESAIERERF…NKAEFPSYLL (465 aa)). Positions 523-534 (PASQETGSTGNG) are enriched in polar residues. 4 stretches are compositionally biased toward basic and acidic residues: residues 562-572 (DSIKKPEEIKQ), 593-663 (PENH…ECKQ), 672-685 (KQNE…KPND), and 694-939 (ETTK…DNKA). Phosphothreonine occurs at positions 713 and 746. Phosphoserine is present on Ser-912. The short motif at 996–1009 (NKGAKPVVVLQKLS) is the PxVxL motif element. Disordered stretches follow at residues 1017–1047 (IKDR…DQSV) and 1060–1191 (ESTM…LTPE). Lys-1082 is modified (N6-acetyllysine). Residues Ser-1089, Ser-1090, and Ser-1096 each carry the phosphoserine modification. The segment covering 1089 to 1100 (SSDEDNDSDEAF) has biased composition (acidic residues). Residues 1109–1139 (KDDDKAWEYEERDRRSSGDHRRSGHSHEGRR) show a composition bias toward basic and acidic residues. Residues Ser-1150, Ser-1152, and Ser-1154 each carry the phosphoserine modification. Tyr-1159 carries the phosphotyrosine modification. Ser-1160 is modified (phosphoserine). Residues 1171 to 1182 (KMKKKEKQKKRK) show a composition bias toward basic residues. Thr-1189 bears the Phosphothreonine mark. Ser-1197 is subject to Phosphoserine. The tract at residues 1691 to 1710 (AMKSQKDEESSEGTHHAKEI) is disordered. HEAT repeat units lie at residues 1767-1805 (AQSF…VDPS), 1843-1881 (PQLA…EQPT), 1945-1984 (YDWF…HILK), 2227-2267 (VNLK…LKEM), and 2313-2351 (LIHP…KYAG). The span at 2473–2489 (VKDKRKERKSSPSKENE) shows a compositional bias: basic and acidic residues. Disordered stretches follow at residues 2473 to 2520 (VKDK…DDIN) and 2651 to 2696 (TSLL…DSTE). 7 positions are modified to phosphoserine: Ser-2493, Ser-2509, Ser-2511, Ser-2513, Ser-2515, Ser-2652, and Ser-2658. Residues 2510 to 2519 (DSDSDSEDDI) show a composition bias toward acidic residues. Thr-2667 carries the post-translational modification Phosphothreonine. Ser-2672 carries the phosphoserine modification.

Belongs to the SCC2/Nipped-B family. In terms of assembly, heterodimerizes with MAU2/SCC4 to form the cohesin loading complex. The NIPBL-MAU2 heterodimer interacts with the cohesin complex composed of SMC1A/B and SMC3 heterodimer, RAD21 and STAG1/SA1. NIPBL directly contacts all members of the complex, RAD21, SMC1A/B, SMC3 and STAG1. Interacts directly (via PxVxL motif) with CBX5. Interacts with ZNF609 (via N-terminus). Interacts with the multiprotein complex Integrator. Interacts (via PxVxL motif) with CBX3. Interacts with BRD4. In terms of tissue distribution, widely expressed. Highly expressed in heart, skeletal muscle, fetal and adult liver, fetal and adult kidney. Expressed at intermediates level in thymus, placenta, peripheral leukocyte and small intestine. Weakly or not expressed in brain, colon, spleen and lung.

The protein localises to the nucleus. The protein resides in the chromosome. Functionally, plays an important role in the loading of the cohesin complex on to DNA. Forms a heterodimeric complex (also known as cohesin loading complex) with MAU2/SCC4 which mediates the loading of the cohesin complex onto chromatin. Plays a role in cohesin loading at sites of DNA damage. Its recruitment to double-strand breaks (DSBs) sites occurs in a CBX3-, RNF8- and RNF168-dependent manner whereas its recruitment to UV irradiation-induced DNA damage sites occurs in a ATM-, ATR-, RNF8- and RNF168-dependent manner. Along with ZNF609, promotes cortical neuron migration during brain development by regulating the transcription of crucial genes in this process. Preferentially binds promoters containing paused RNA polymerase II. Up-regulates the expression of SEMA3A, NRP1, PLXND1 and GABBR2 genes, among others. The protein is Nipped-B-like protein (NIPBL) of Homo sapiens (Human).